A 655-amino-acid polypeptide reads, in one-letter code: Protein movement modulator (655 aa).

The Extracellular segment spans residues 1–54 (MEQPSILVKILHSIPHVNYTFRRVNDTFNPDSDVYLEPTNNKLQCQQKGIELQS). 2 N-linked (GlcNAc...) asparagine glycosylation sites follow: Asn-18 and Asn-25. The helical transmembrane segment at 55–75 (LVILASIPAGLLIGSLLGLLL) threads the bilayer. At 76 to 95 (YLLTRCCDRRQRKPSAQRCQ) the chain is on the cytoplasmic side. The helical transmembrane segment at 96–116 (SCSLVIITLMTCAAIGLGLYG) threads the bilayer. Residues 117 to 231 (NDDFHNGLLQ…GEFYESIRWP (115 aa)) are Extracellular-facing. N-linked (GlcNAc...) asparagine glycans are attached at residues Asn-171, Asn-188, and Asn-211. Residues 232–252 (ATLAFLTVLLLLCTVLVIGVA) traverse the membrane as a helical segment. Residues 253-258 (RRSRCT) are Cytoplasmic-facing. A helical membrane pass occupies residues 259-279 (LIFFSVSGLFCIIICWLLAGV). The Extracellular portion of the chain corresponds to 280–401 (YLASSVAAGD…ALRGLCGGGL (122 aa)). Residues Asn-326 and Asn-372 are each glycosylated (N-linked (GlcNAc...) asparagine). A helical transmembrane segment spans residues 402 to 422 (LGLSLMMVAGLLTSFLLTILV). The Cytoplasmic segment spans residues 423–655 (YADSHAWIYL…CKTLESNDFY (233 aa)). Positions 446–576 (APLFPASNAP…NNHYNNTQHR (131 aa)) are disordered. Residues 450-464 (PASNAPSASISPTAP) show a composition bias toward low complexity. Over residues 465-480 (LSTGTINRTLLHHQQA) the composition is skewed to polar residues. The span at 482-509 (SGGGSGTLPGSGGGAGAGGGVGANGHNG) shows a compositional bias: gly residues. Low complexity-rich tracts occupy residues 526–539 (SPSS…STAT) and 546–576 (SYHN…TQHR). Residues Ser-597 and Ser-599 each carry the phosphoserine modification.

It belongs to the tweety family.

The protein resides in the cell membrane. It catalyses the reaction chloride(in) = chloride(out). In terms of biological role, probable large-conductance Ca(2+)-activated chloride channel. Modulator of embryonic movement. In Drosophila melanogaster (Fruit fly), this protein is Protein movement modulator.